The primary structure comprises 1277 residues: MARRSQSSSQGENPLDPNYLPPHYKEYYRIAIDALAENGPEAYEQFLMEEGAPDFLCPNEVEHISRSLQRPPESGQENPYPDSVYGSQEDADGSSGTYWPMDSDTAAPELDLGWPTIYGFQGTEVTTLMHPPPPDNPTIKEEVRRMIRSAQQVIGIVMDIFTDADILSELLDAANRRIPVYIILDQMNCQLFLDMAAKYRVNLNYVEFLRVRTVSGPTYFCRKGSTFKGNLQEKFLLVDCTMVLSGTYSFMWSFEKIHRSIAHIFQGELVSSFDEEFRILFAQSDPLIPSESALAKMDKSYMGMVPFAGPRPMFDRKLHFMFPREENPSQQFPSYGVDPDRHYFQPFRREDMIRQTMDPGGMRMYGKNLGDPMDKMQMSFVQNKQLEAMEAFKRHSFAEGTFENYTSSRQYSRQMFMNNNDEYRLQSSQVQKSQFMQFQSPLGTARPQGLFEKIRGGRQGLQEMDEFDSRYPTKGLPGEGHFALDGPPMRPGYNPSNSSREVRHGSDQMVIGGEGRFGQRSLGRQKFMCQISPTQKQGMEPKYFFHDQDADKKPQENKQGLRSWRISSYLSGIQSDQDEEGLPIPLDPELYDDALVPVERAVPASDTLFKYSMDPVPPYHPGTAPHDLPYDRANENPMKFSMDPVQLHRPNVPSQDVPMHLERAGNESLVKYSLDPIPPFKPNVAGTDVPMPLERKPTANEILSRYSVDPIPPYKTFGSTGDLSVEKAKENPPAEKEKEEGLLSRHDSFRTRTNPLIQRGSRLRSSLIFSSSKLEQHTSTAESVQEMQKEQSTSELVSENETGRTTSKVAEILQKYRGINKDANSTTVTQAKAASRTIHEESEDGQSVSAEEVAYKAVESTVDTKGSMSHVQQESQYRSVASSHLESLLGKHQTTLSMSKVEQMTSSIQTIGNISAAPSESGPTVPELSEVHKQSSISHMQQESHYKSVVTSKLEGLLNRDQQVMSMSKVEQTSSTIQTIGNISPAPPDSKESGPTITEVTEATQSSENLPTRPNSAFHFGSALESMSQNPTPSSSLNKSEEDLAKTDQNFFRKGSMRLKQFLQSKAEKKAEEDLASDNAKAEKQHSTLRRLSKSDSQEVAASTDMEEKSAKSLSVSPPKTSSISQSRLSASTSNVIFSSNLRDDTKVILEQISANSQKNRAEMVKQAQQIQATGDPDPATSKPESKTEGTASTDAAAITRTGSFLSRSRFSRPSPSSPEDRDILLKRMESIRKEKRVYSRFEVFCKKDEQPSHADDNDDKKAGKIIPKLLGNLIKK.

A compositionally biased stretch (polar residues) spans 1–12; it reads MARRSQSSSQGE. Disordered stretches follow at residues 1 to 20, 67 to 98, 717 to 756, 772 to 805, 971 to 1018, 1070 to 1130, 1158 to 1225, and 1247 to 1266; these read MARR…PNYL, SLQR…SGTY, FGST…TNPL, SKLE…TGRT, EQTS…NSAF, KAEE…SRLS, QKNR…RDIL, and KKDE…AGKI. A compositionally biased stretch (basic and acidic residues) spans 724-750; sequence SVEKAKENPPAEKEKEEGLLSRHDSFR. Composition is skewed to polar residues over residues 777-805, 971-982, 993-1015, and 1112-1130; these read HTST…TGRT, EQTSSTIQTIGN, SGPT…TRPN, and KSLS…SRLS. Positions 1204–1215 are enriched in low complexity; the sequence is SFLSRSRFSRPS. Residues 1247-1263 are compositionally biased toward basic and acidic residues; the sequence is KKDEQPSHADDNDDKKA.

It belongs to the FAM83 family.

It is found in the cytoplasm. The protein resides in the cytoskeleton. Its function is as follows. May play a role in keratin cytoskeleton disassembly. The chain is Protein FAM83H from Xenopus tropicalis (Western clawed frog).